A 556-amino-acid polypeptide reads, in one-letter code: MFDKLPYEIFKQIAWRIPQEDKISLTYVCKRSYESIIPFIYQNLFLNETYHINGDYDNSFGTCYWSVLNFHYIDEDDSNTKNDMSNRRLAKVKFSYFERTLAESPKRLCPLINRIRCTWHLNEDVMTNVLKLLSEYGSNLKFVDQFVRSSVNKGLEPLSKQLKTLTLTPPTLMPTHNSVSGSYLNKIDRLLLKCDLSRLEKLSIHINALKYFKNTGSPMKIKALVLNLRPDTLNLAEYDASDDFLKELEYIDIFDASTLRQLEILSWYSRDDFPSGEEGGFDRLYVKWGLEGFWKFPNIEKLSLASLVYSEFFLMNCLAVFHNLKILKLDYMGKFDFDVSLINFLSKQVCGKKLQRFDIHCQLNHRLFFPMTDNPLTRLNFDGFCPCSTCKNTIHEVILKKIFPETRSKLLKNPNKFQAHNFFYQMFFENKIMPYTNIIDNESPAMGWDSVPIETFVRKFNENLQSTIENTENITVNKITREDAISLYHLYLHYLKDVFKVFEQSLPNLEYLTINGIPTKIIQVDELQRCAVPLFYNNGYKSNSVYELVDAEALFS.

The 44-residue stretch at 1–44 (MFDKLPYEIFKQIAWRIPQEDKISLTYVCKRSYESIIPFIYQNL) folds into the F-box domain.

In terms of assembly, interacts with SKP1. Component of the probable SCF(YDR131C) complex containing CDC53, SKP1, RBX1 and YDR131C.

It localises to the vacuole. The protein operates within protein modification; protein ubiquitination. Functionally, substrate recognition component of a SCF (SKP1-CUL1-F-box protein) E3 ubiquitin-protein ligase complex which mediates the ubiquitination and subsequent proteasomal degradation of target proteins. Probably recognizes and binds to phosphorylated target proteins. The polypeptide is F-box protein YDR131C (Saccharomyces cerevisiae (strain ATCC 204508 / S288c) (Baker's yeast)).